Here is a 434-residue protein sequence, read N- to C-terminus: Serine/threonine transporter SstT (434 aa).

A run of 9 helical transmembrane segments spans residues 14-34 (IVIG…WSFI), 41-61 (FVGA…MSAI), 72-92 (FGTV…AAVA), 135-155 (ALVE…GSGL), 172-192 (TVSA…VGLL), 210-230 (LLML…PFMV), 282-302 (ISIP…VSIM), 316-336 (IFLA…VSGI), and 351-371 (FGIS…IGVV). The interval 414–434 (KGTAEVVTPEKANEAEESEQV) is disordered.

It belongs to the dicarboxylate/amino acid:cation symporter (DAACS) (TC 2.A.23) family.

The protein resides in the cell membrane. It carries out the reaction L-serine(in) + Na(+)(in) = L-serine(out) + Na(+)(out). The enzyme catalyses L-threonine(in) + Na(+)(in) = L-threonine(out) + Na(+)(out). Involved in the import of serine and threonine into the cell, with the concomitant import of sodium (symport system). The chain is Serine/threonine transporter SstT from Lacticaseibacillus paracasei (strain ATCC 334 / BCRC 17002 / CCUG 31169 / CIP 107868 / KCTC 3260 / NRRL B-441) (Lactobacillus paracasei).